Reading from the N-terminus, the 314-residue chain is Olfactory receptor 14K1 (314 aa).

Topologically, residues 1–23 are extracellular; it reads MTNQTQMMEFLLVRFTENWVLLR. An N-linked (GlcNAc...) asparagine glycan is attached at N3. A helical transmembrane segment spans residues 24 to 44; sequence LHALLFSLIYLTAVLMNLVII. Topologically, residues 45–52 are cytoplasmic; that stretch reads LLMILDHR. A helical membrane pass occupies residues 53 to 73; it reads LHMAMYFFLRHLSFLDLCLIS. Residues 74–97 lie on the Extracellular side of the membrane; the sequence is ATVPKSILNSVASTDSISFLGCVL. Cysteines 95 and 187 form a disulfide. The helical transmembrane segment at 98–118 threads the bilayer; sequence QLFLVVLLAGSEIGILTAMSY. Over 119–131 the chain is Cytoplasmic; that stretch reads DRYAAICCPLHCE. Residues 132–152 traverse the membrane as a helical segment; sequence AVMSRGLCVQLMALSWLNRGA. Topologically, residues 153 to 194 are extracellular; it reads LGLLYTAGTFSLNFYGSDELHQFFCDVPALLKLTCSKEHAII. A helical transmembrane segment spans residues 195-215; it reads SVSVAIGVCYAFSCLVCIVVS. At 216-235 the chain is on the cytoplasmic side; the sequence is YVYIFSAVLRISQRQRQSKA. The helical transmembrane segment at 236 to 256 threads the bilayer; sequence FSNCVPHLIVVTVFLVTGAVA. The Extracellular portion of the chain corresponds to 257-269; it reads YLKPGSDAPSILD. Residues 270–290 form a helical membrane-spanning segment; the sequence is LLVSVFYSVAPPTLNPVIYCL. Residues 291–314 are Cytoplasmic-facing; sequence KNKDIKSALSKVLWNVRSSGVMKR.

The protein belongs to the G-protein coupled receptor 1 family.

It is found in the cell membrane. Functionally, odorant receptor. The polypeptide is Olfactory receptor 14K1 (OR14K1) (Homo sapiens (Human)).